The sequence spans 479 residues: GTPase Der (479 aa).

2 consecutive EngA-type G domains span residues 3 to 166 (PVVA…AEEY) and 192 to 365 (LKLA…ASAT). GTP-binding positions include 9-16 (GRPNVGKS), 56-60 (DTGGI), 118-121 (NKID), 198-205 (GRPNVGKS), 245-249 (DTAGV), and 310-313 (NKWD). The KH-like domain maps to 366–450 (QRISTSKLTK…PIKVEFREPV (85 aa)).

Belongs to the TRAFAC class TrmE-Era-EngA-EngB-Septin-like GTPase superfamily. EngA (Der) GTPase family. As to quaternary structure, associates with the 50S ribosomal subunit.

Functionally, GTPase that plays an essential role in the late steps of ribosome biogenesis. The protein is GTPase Der of Idiomarina loihiensis (strain ATCC BAA-735 / DSM 15497 / L2-TR).